The following is a 68-amino-acid chain: Large ribosomal subunit protein uL29 (68 aa).

The protein belongs to the universal ribosomal protein uL29 family.

The chain is Large ribosomal subunit protein uL29 from Streptococcus thermophilus (strain ATCC BAA-250 / LMG 18311).